The chain runs to 152 residues: Ribosome maturation factor RimP (152 aa).

This sequence belongs to the RimP family.

Its subcellular location is the cytoplasm. Required for maturation of 30S ribosomal subunits. This is Ribosome maturation factor RimP from Yersinia pestis.